Consider the following 387-residue polypeptide: Deoxyhypusine synthase (387 aa).

Residues 108–112 (SNLIS), 134–136 (SAG), E140, and D257 each bind NAD(+). Residue 139-140 (EE) participates in spermidine binding. D262 serves as a coordination point for spermidine. G304 serves as a coordination point for NAD(+). H309 lines the spermidine pocket. Residue 329 to 330 (TG) coordinates NAD(+). Spermidine-binding positions include 335 to 337 (GSD) and 344 to 350 (EAVSWGK). The Nucleophile role is filled by K350. 363–364 (DV) provides a ligand contact to NAD(+).

Belongs to the deoxyhypusine synthase family. Homotetramer. NAD(+) is required as a cofactor.

The enzyme catalyses [eIF5A protein]-L-lysine + spermidine = [eIF5A protein]-deoxyhypusine + propane-1,3-diamine. Its pathway is protein modification; eIF5A hypusination. Catalyzes the NAD-dependent oxidative cleavage of spermidine and the subsequent transfer of the butylamine moiety of spermidine to the epsilon-amino group of a specific lysine residue of the eIF-5A precursor protein to form the intermediate deoxyhypusine residue. The polypeptide is Deoxyhypusine synthase (Saccharomyces cerevisiae (strain ATCC 204508 / S288c) (Baker's yeast)).